Reading from the N-terminus, the 498-residue chain is ADP,ATP carrier protein 1 (498 aa).

Residues 1 to 33 (MNNPKNDNYLSELSKVIWPIERYENKKFLPMAF) are Cytoplasmic-facing. A helical membrane pass occupies residues 34–54 (MMFCILLNYSTLRSIKDGFVV). Residues cysteine 37 and cysteine 85 are joined by a disulfide bond. At 55 to 67 (TDIGAEAISFLKT) the chain is on the extracellular side. The chain crosses the membrane as a helical span at residues 68 to 88 (YIVLPSAVIAMVIYVKLCDIL). Residues 89–92 (KQEN) are Cytoplasmic-facing. A helical transmembrane segment spans residues 93–113 (VFYVITSFFLGYFALFAFVLY). Residues 114 to 147 (PYPDLVHPDPETIESWSVAYPNVKWFIRIVGKWS) are Extracellular-facing. Residues 148-168 (FASFYTMAELWGTMMLSLLFW) traverse the membrane as a helical segment. The Cytoplasmic segment spans residues 169–184 (QFANQITKTDEAKRFY). The chain crosses the membrane as a helical span at residues 185–205 (SMFGLLANLALPVTSVIIGYC). At 206–218 (LHEKTQIVAEHLK) the chain is on the extracellular side. Residues 219–239 (FVPLFVIMITSSFLVILTYRW) form a helical membrane-spanning segment. The Cytoplasmic portion of the chain corresponds to 240–279 (MNKNVLTDPRLYDPALVKEKKAKAKMSLIDSFKMIFTSKY). The helical transmembrane segment at 280–300 (VGYIALLLIAYGVSVNLVEGV) threads the bilayer. Over 301 to 320 (WKSKVKELYPTKEAYTIYMG) the chain is Extracellular. A helical membrane pass occupies residues 321–341 (KFQFYQGWVAIAFMLIGSNIL). The Cytoplasmic portion of the chain corresponds to 342 to 348 (RKVSWLT). Residues 349 to 369 (AAMITPLMMLITGAAFFAFIF) traverse the membrane as a helical segment. The Extracellular portion of the chain corresponds to 370 to 379 (FDSVIAMHLT). The chain crosses the membrane as a helical span at residues 380–400 (GILASGPLALAVMIGMIQNVL). Over 401–438 (SKGVKYSLFDATKNMAYIPLDKDLRVKGQAAVEVIGGR) the chain is Cytoplasmic. 436 to 442 (GGRFGKS) is an ATP binding site. A helical transmembrane segment spans residues 439-459 (FGKSGGAIIQSTFFILFPAFG). At 460–465 (FVEATP) the chain is on the extracellular side. A helical transmembrane segment spans residues 466–486 (YFASIFFVIVILWIYAVKGLN). At 487 to 498 (KEYKVLVNKTEK) the chain is on the cytoplasmic side.

This sequence belongs to the ADP/ATP translocase tlc family.

It localises to the cell membrane. Functionally, provides the rickettsial cell with host ATP in exchange for rickettsial ADP. This is an obligate exchange system. This energy acquiring activity is an important component of rickettsial parasitism. In Rickettsia conorii (strain ATCC VR-613 / Malish 7), this protein is ADP,ATP carrier protein 1 (tlcA).